The chain runs to 96 residues: UPF0235 protein Tola_0962 (96 aa).

The protein belongs to the UPF0235 family.

This chain is UPF0235 protein Tola_0962, found in Tolumonas auensis (strain DSM 9187 / NBRC 110442 / TA 4).